A 245-amino-acid chain; its full sequence is Nicotinamide/nicotinic acid mononucleotide adenylyltransferase 3 (245 aa).

The NAD(+) site is built by serine 14 and phenylalanine 15. Residues histidine 22 and lysine 56 each contribute to the ATP site. NAD(+)-binding residues include tryptophan 90, threonine 93, glycine 134, and aspartate 136. Lysine 139 contacts ATP. NAD(+)-binding residues include leucine 146, tryptophan 147, arginine 166, and asparagine 197. Residue 202-205 (TYVR) participates in ATP binding.

It belongs to the eukaryotic NMN adenylyltransferase family. Homotetramer. The cofactor is Mg(2+).

It is found in the mitochondrion. It carries out the reaction beta-nicotinamide D-ribonucleotide + ATP + H(+) = diphosphate + NAD(+). The enzyme catalyses nicotinate beta-D-ribonucleotide + ATP + H(+) = deamido-NAD(+) + diphosphate. Its pathway is cofactor biosynthesis; NAD(+) biosynthesis; NAD(+) from nicotinamide D-ribonucleotide: step 1/1. It functions in the pathway cofactor biosynthesis; NAD(+) biosynthesis; deamido-NAD(+) from nicotinate D-ribonucleotide: step 1/1. Its activity is regulated as follows. Activity is strongly inhibited by galotannin. Inhibited by P1-(adenosine-5')-P4-(nicotinic-acid-riboside-5')-tetraphosphate (Nap4AD). In terms of biological role, catalyzes the formation of NAD(+) from nicotinamide mononucleotide (NMN) and ATP. Can also use the deamidated form; nicotinic acid mononucleotide (NaMN) as substrate with the same efficiency. Can use triazofurin monophosphate (TrMP) as substrate. Can also use GTP and ITP as nucleotide donors. Also catalyzes the reverse reaction, i.e. the pyrophosphorolytic cleavage of NAD(+). For the pyrophosphorolytic activity, can use NAD(+), NADH, NaAD, nicotinic acid adenine dinucleotide phosphate (NHD), nicotinamide guanine dinucleotide (NGD) as substrates. Fails to cleave phosphorylated dinucleotides NADP(+), NADPH and NaADP(+). Protects against axonal degeneration following injury. May be involved in the maintenance of axonal integrity. Also functions as a stress-response chaperone protein that prevents toxic aggregation of proteins; this function may be independent of its NAD(+) synthesis activity. This Mus musculus (Mouse) protein is Nicotinamide/nicotinic acid mononucleotide adenylyltransferase 3.